A 303-amino-acid polypeptide reads, in one-letter code: Acetyl-coenzyme A carboxylase carboxyl transferase subunit beta (303 aa).

Residues Leu25–Gly294 form the CoA carboxyltransferase N-terminal domain.

It belongs to the AccD/PCCB family. Acetyl-CoA carboxylase is a heterohexamer composed of biotin carboxyl carrier protein (AccB), biotin carboxylase (AccC) and two subunits each of ACCase subunit alpha (AccA) and ACCase subunit beta (AccD).

It is found in the cytoplasm. It carries out the reaction N(6)-carboxybiotinyl-L-lysyl-[protein] + acetyl-CoA = N(6)-biotinyl-L-lysyl-[protein] + malonyl-CoA. Its pathway is lipid metabolism; malonyl-CoA biosynthesis; malonyl-CoA from acetyl-CoA: step 1/1. Component of the acetyl coenzyme A carboxylase (ACC) complex. Biotin carboxylase (BC) catalyzes the carboxylation of biotin on its carrier protein (BCCP) and then the CO(2) group is transferred by the transcarboxylase to acetyl-CoA to form malonyl-CoA. This is Acetyl-coenzyme A carboxylase carboxyl transferase subunit beta from Rhizobium rhizogenes (strain K84 / ATCC BAA-868) (Agrobacterium radiobacter).